Consider the following 181-residue polypeptide: Succinate dehydrogenase [ubiquinone] cytochrome b small subunit, mitochondrial (181 aa).

Residues 1–31 (MMLPRSMKFMTGRRIFHTATVRAFQSTAKKS) constitute a mitochondrion transit peptide. The Mitochondrial matrix segment spans residues 32 to 66 (LTIPFLPVLPQKPGGVRGTPNDAYVPPPENKLEGS). Residues 67–88 (YHWYMEKIFALSVVPLATTAML) traverse the membrane as a helical segment. The Mitochondrial intermembrane portion of the chain corresponds to 89–98 (TTGPLSTAAD). The helical transmembrane segment at 99–118 (SFFSVMLLGYCYMEFNSCIT) threads the bilayer. Heme is bound at residue Cys-109. Over 119–127 (DYISERVYG) the chain is Mitochondrial matrix. Tyr-120 lines the a ubiquinone pocket. The chain crosses the membrane as a helical span at residues 128–148 (VWHKYAMYMLGLGSAVSLFGI). Over 149–181 (YKLETENDGVVGLVKSLWDSSEKDNSQKIEAKK) the chain is Mitochondrial intermembrane.

Belongs to the CybS family. Forms part of complex II containing four subunits: a flavoprotein (FP), an iron-sulfur protein (IP) and a cytochrome b composed of a large and a small subunit.

Its subcellular location is the mitochondrion inner membrane. It functions in the pathway carbohydrate metabolism; tricarboxylic acid cycle. Functionally, membrane-anchoring subunit of succinate dehydrogenase (SDH) that is involved in system II of the mitochondrial electron transport chain and is responsible for transferring electrons from succinate to ubiquinone (coenzyme Q). SDH3 and SDH4 form the membrane dimer that anchors the catalytic dimer formed by SDH1 and SDH2 to the matrix surface of the mitochondrial inner membrane. Electrons originating from the catalytic dimer enter the membrane dimer for ubiquinone reduction. The protein is Succinate dehydrogenase [ubiquinone] cytochrome b small subunit, mitochondrial (SDH4) of Saccharomyces cerevisiae (strain ATCC 204508 / S288c) (Baker's yeast).